A 201-amino-acid chain; its full sequence is NADH-quinone oxidoreductase subunit C (201 aa).

It belongs to the complex I 30 kDa subunit family. In terms of assembly, NDH-1 is composed of 14 different subunits. Subunits NuoB, C, D, E, F, and G constitute the peripheral sector of the complex.

The protein localises to the cell inner membrane. The catalysed reaction is a quinone + NADH + 5 H(+)(in) = a quinol + NAD(+) + 4 H(+)(out). Its function is as follows. NDH-1 shuttles electrons from NADH, via FMN and iron-sulfur (Fe-S) centers, to quinones in the respiratory chain. The immediate electron acceptor for the enzyme in this species is believed to be ubiquinone. Couples the redox reaction to proton translocation (for every two electrons transferred, four hydrogen ions are translocated across the cytoplasmic membrane), and thus conserves the redox energy in a proton gradient. This Sinorhizobium medicae (strain WSM419) (Ensifer medicae) protein is NADH-quinone oxidoreductase subunit C.